We begin with the raw amino-acid sequence, 185 residues long: Elongation factor P (185 aa).

The protein belongs to the elongation factor P family.

The protein resides in the cytoplasm. The protein operates within protein biosynthesis; polypeptide chain elongation. Its function is as follows. Involved in peptide bond synthesis. Stimulates efficient translation and peptide-bond synthesis on native or reconstituted 70S ribosomes in vitro. Probably functions indirectly by altering the affinity of the ribosome for aminoacyl-tRNA, thus increasing their reactivity as acceptors for peptidyl transferase. The sequence is that of Elongation factor P from Staphylococcus saprophyticus subsp. saprophyticus (strain ATCC 15305 / DSM 20229 / NCIMB 8711 / NCTC 7292 / S-41).